The chain runs to 107 residues: uncharacterized protein (107 aa).

The segment at 87–107 (KNRNGPKAEKRRPYVRAHAKW) is disordered.

This is an uncharacterized protein from Saccharomyces cerevisiae (strain ATCC 204508 / S288c) (Baker's yeast).